A 292-amino-acid polypeptide reads, in one-letter code: Keratin-associated protein 10-9 (292 aa).

Repeat copies occupy residues 26–30 (CCEPP), 31–35 (CCATS), 36–40 (CCAPA), 57–61 (CCQVT), 79–83 (CCQQS), 99–103 (CCVPV), 104–108 (CCKPV), 109–113 (CCVPV), 114–118 (CCGAS), 120–124 (CCQQS), 130–134 (CCASS), 140–144 (CCVPV), 145–149 (CCKPV), 150–154 (CCAPT), 162–166 (CCQQS), 172–176 (CCTSS), 182–186 (YCVPV), 187–191 (CCKPV), 192–196 (CCKPI), 197–201 (CCVPV), 209–213 (CCQQS), 219–223 (CCTTS), 224–228 (CCRPS), 243–247 (CCVPV), and 250–254 (CCAPT). The tract at residues 26-254 (CCEPPCCATS…VPVSSCCAPT (229 aa)) is 25 X 5 AA repeats of C-C-X(3).

This sequence belongs to the KRTAP type 10 family. In terms of assembly, interacts with hair keratins. Restricted to a narrow region of the hair fiber cuticle, lying approximately 20 cell layers above the apex of the dermal papilla of the hair root; not detected in any other tissues.

In the hair cortex, hair keratin intermediate filaments are embedded in an interfilamentous matrix, consisting of hair keratin-associated proteins (KRTAP), which are essential for the formation of a rigid and resistant hair shaft through their extensive disulfide bond cross-linking with abundant cysteine residues of hair keratins. The matrix proteins include the high-sulfur and high-glycine-tyrosine keratins. This Homo sapiens (Human) protein is Keratin-associated protein 10-9 (KRTAP10-9).